The following is a 266-amino-acid chain: MMQRCVWRLQMPLALRRGLASGEAKNQGVSPEAEPLDSFERQYLKDRIEISPFQRVILGAGSSIAALLDPRRHDMIACLGETTGEGALENILDTMQASEEGQRIMAEKPRIHTSTIDFKLLESLPADSFGAAYVKFLKDNQVTPDSRMAVRFLEDPKLAYLMTRYRECHDLIHTVLGMPTNMLGEVAVKWVEALNTGLPMCYGGAVFGAVRLRPKQRRAYLKHYLPWALENGKRSKPLMPVYWEKRWEQKLQDLRAELGITVLNKV.

Zn(2+) contacts are provided by His169, Asp170, His173, and Glu185.

It belongs to the COQ4 family. In terms of assembly, component of a multi-subunit COQ enzyme complex. Zn(2+) is required as a cofactor.

Its subcellular location is the mitochondrion inner membrane. The enzyme catalyses a 4-hydroxy-3-methoxy-5-(all-trans-polyprenyl)benzoate + H(+) = a 2-methoxy-6-(all-trans-polyprenyl)phenol + CO2. It functions in the pathway cofactor biosynthesis; ubiquinone biosynthesis. Lyase that catalyzes the C1-decarboxylation of 4-hydroxy-3-methoxy-5-(all-trans-polyprenyl)benzoic acid into 2-methoxy-6-(all-trans-polyprenyl)phenol during ubiquinone biosynthesis. This Drosophila ananassae (Fruit fly) protein is Ubiquinone biosynthesis protein COQ4 homolog, mitochondrial.